A 176-amino-acid chain; its full sequence is ATP-dependent protease subunit HslV (176 aa).

Residue Thr-5 is part of the active site. Residues Ala-161, Cys-164, and Thr-167 each contribute to the Na(+) site.

This sequence belongs to the peptidase T1B family. HslV subfamily. As to quaternary structure, a double ring-shaped homohexamer of HslV is capped on each side by a ring-shaped HslU homohexamer. The assembly of the HslU/HslV complex is dependent on binding of ATP.

It localises to the cytoplasm. The catalysed reaction is ATP-dependent cleavage of peptide bonds with broad specificity.. Its activity is regulated as follows. Allosterically activated by HslU binding. Functionally, protease subunit of a proteasome-like degradation complex believed to be a general protein degrading machinery. The polypeptide is ATP-dependent protease subunit HslV (Desulforamulus reducens (strain ATCC BAA-1160 / DSM 100696 / MI-1) (Desulfotomaculum reducens)).